The chain runs to 680 residues: Nodulation protein NolNO (680 aa).

This sequence belongs to the NodU/CmcH family.

It localises to the cytoplasm. Functionally, involved in the O-carbamoylation of nod factors. The chain is Nodulation protein NolNO (nolO) from Sinorhizobium fredii (strain NBRC 101917 / NGR234).